Consider the following 133-residue polypeptide: Ribonuclease P protein component (133 aa).

This sequence belongs to the RnpA family. Consists of a catalytic RNA component (M1 or rnpB) and a protein subunit.

It catalyses the reaction Endonucleolytic cleavage of RNA, removing 5'-extranucleotides from tRNA precursor.. Its function is as follows. RNaseP catalyzes the removal of the 5'-leader sequence from pre-tRNA to produce the mature 5'-terminus. It can also cleave other RNA substrates such as 4.5S RNA. The protein component plays an auxiliary but essential role in vivo by binding to the 5'-leader sequence and broadening the substrate specificity of the ribozyme. The polypeptide is Ribonuclease P protein component (Pseudomonas savastanoi pv. phaseolicola (strain 1448A / Race 6) (Pseudomonas syringae pv. phaseolicola (strain 1448A / Race 6))).